The primary structure comprises 154 residues: Iron-sulfur cluster assembly 2 homolog, mitochondrial (154 aa).

Residues 1-8 (MAASRALS) constitute a mitochondrion transit peptide. C79, C144, and C146 together coordinate Fe cation.

This sequence belongs to the HesB/IscA family. Heterotetramer; forms a dimer of dimers with IBA57. Interacts with [2Fe-2S]-ISCA2 forming the heterodimer [2Fe- 2S]-ISCA2-IBA57 complex; [2Fe-2S] cluster binding is absolutely required to promote the complex formation.

It is found in the mitochondrion. Functionally, involved in the maturation of mitochondrial 4Fe-4S proteins functioning late in the iron-sulfur cluster assembly pathway. May be involved in the binding of an intermediate of Fe/S cluster assembly. The polypeptide is Iron-sulfur cluster assembly 2 homolog, mitochondrial (Isca2) (Mus musculus (Mouse)).